Reading from the N-terminus, the 167-residue chain is Small ribosomal subunit protein uS5 (167 aa).

An S5 DRBM domain is found at 12-75; it reads LEDNVVAINR…EAARKNLIEV (64 aa).

This sequence belongs to the universal ribosomal protein uS5 family. As to quaternary structure, part of the 30S ribosomal subunit. Contacts proteins S4 and S8.

Functionally, with S4 and S12 plays an important role in translational accuracy. In terms of biological role, located at the back of the 30S subunit body where it stabilizes the conformation of the head with respect to the body. The chain is Small ribosomal subunit protein uS5 from Levilactobacillus brevis (strain ATCC 367 / BCRC 12310 / CIP 105137 / JCM 1170 / LMG 11437 / NCIMB 947 / NCTC 947) (Lactobacillus brevis).